We begin with the raw amino-acid sequence, 388 residues long: Succinate--CoA ligase [ADP-forming] subunit beta (388 aa).

The ATP-grasp domain occupies 9–245 (KELLKSYGLP…KSQENERELK (237 aa)). ATP-binding positions include lysine 46, 53 to 55 (GRG), glutamate 100, tyrosine 103, and glutamate 108. The Mg(2+) site is built by asparagine 200 and aspartate 214. Substrate is bound by residues asparagine 265 and 322 to 324 (GIV).

It belongs to the succinate/malate CoA ligase beta subunit family. In terms of assembly, heterotetramer of two alpha and two beta subunits. Mg(2+) is required as a cofactor.

It carries out the reaction succinate + ATP + CoA = succinyl-CoA + ADP + phosphate. The catalysed reaction is GTP + succinate + CoA = succinyl-CoA + GDP + phosphate. It participates in carbohydrate metabolism; tricarboxylic acid cycle; succinate from succinyl-CoA (ligase route): step 1/1. Succinyl-CoA synthetase functions in the citric acid cycle (TCA), coupling the hydrolysis of succinyl-CoA to the synthesis of either ATP or GTP and thus represents the only step of substrate-level phosphorylation in the TCA. The beta subunit provides nucleotide specificity of the enzyme and binds the substrate succinate, while the binding sites for coenzyme A and phosphate are found in the alpha subunit. This is Succinate--CoA ligase [ADP-forming] subunit beta from Psychrobacter arcticus (strain DSM 17307 / VKM B-2377 / 273-4).